Reading from the N-terminus, the 271-residue chain is Methylthioribulose-1-phosphate dehydratase (271 aa).

Substrate is bound at residue Cys123. His141 and His143 together coordinate Zn(2+). Residue Glu166 is the Proton donor/acceptor of the active site. Position 231 (His231) interacts with Zn(2+).

It belongs to the aldolase class II family. MtnB subfamily. Zn(2+) serves as cofactor.

It localises to the cytoplasm. The enzyme catalyses 5-(methylsulfanyl)-D-ribulose 1-phosphate = 5-methylsulfanyl-2,3-dioxopentyl phosphate + H2O. Its pathway is amino-acid biosynthesis; L-methionine biosynthesis via salvage pathway; L-methionine from S-methyl-5-thio-alpha-D-ribose 1-phosphate: step 2/6. Its function is as follows. Catalyzes the dehydration of methylthioribulose-1-phosphate (MTRu-1-P) into 2,3-diketo-5-methylthiopentyl-1-phosphate (DK-MTP-1-P). This Candida dubliniensis (strain CD36 / ATCC MYA-646 / CBS 7987 / NCPF 3949 / NRRL Y-17841) (Yeast) protein is Methylthioribulose-1-phosphate dehydratase.